Consider the following 319-residue polypeptide: Mitochondrial thiamine pyrophosphate carrier 1 (319 aa).

Solcar repeat units lie at residues 12-110 (GQRY…VTQS), 121-207 (PQPA…VRVP), and 214-309 (PFGS…VLKI). 6 helical membrane-spanning segments follow: residues 17 to 35 (VVAAGAIAGMVSRFCVAPL), 91 to 107 (LLYIFYGAIQFTTYRTV), 127 to 147 (FVSGATAGGIGTFTTYPFDLL), 182 to 201 (GVSAAVAQIVPYMGLFFATY), 221 to 237 (TAGVIASVIAKTGVFPL), and 284 to 301 (GLTVSLIKAAPASAVTMW).

The protein belongs to the mitochondrial carrier (TC 2.A.29) family.

It is found in the mitochondrion inner membrane. Functionally, mitochondrial transporter that mediates uptake of thiamine pyrophosphate (ThPP) into mitochondria. The chain is Mitochondrial thiamine pyrophosphate carrier 1 (TPC1) from Coccidioides immitis (strain RS) (Valley fever fungus).